The sequence spans 133 residues: MAEKKKGGRWGIAHIYSSYNNTIITITDITGAEIIARVSGGMIVKADRDEGNPYTAMQAALRAAAIAKEKGIDGVHIKVRAPGGNKHTTPGPGAQAAIRALARAGLKIGRIEDVTPIPHDGTRPPGGKRGRRV.

Positions 114–133 (VTPIPHDGTRPPGGKRGRRV) are disordered.

The protein belongs to the universal ribosomal protein uS11 family. In terms of assembly, part of the 30S ribosomal subunit.

In terms of biological role, located on the platform of the 30S subunit. The chain is Small ribosomal subunit protein uS11 from Archaeoglobus fulgidus (strain ATCC 49558 / DSM 4304 / JCM 9628 / NBRC 100126 / VC-16).